Reading from the N-terminus, the 434-residue chain is Isocitrate lyase (434 aa).

Substrate is bound at residue 91–93 (SGW). A Mg(2+)-binding site is contributed by aspartate 157. Residue cysteine 195 is the Proton acceptor of the active site. Residues 196–197 (GH), arginine 232, 317–321 (NCSPS), and threonine 351 contribute to the substrate site.

This sequence belongs to the isocitrate lyase/PEP mutase superfamily. Isocitrate lyase family. Homotetramer. Mg(2+) serves as cofactor.

It catalyses the reaction D-threo-isocitrate = glyoxylate + succinate. The protein operates within carbohydrate metabolism; glyoxylate cycle; (S)-malate from isocitrate: step 1/2. Its function is as follows. Involved in the metabolic adaptation in response to environmental changes. Catalyzes the reversible formation of succinate and glyoxylate from isocitrate, a key step of the glyoxylate cycle, which operates as an anaplerotic route for replenishing the tricarboxylic acid cycle during growth on fatty acid substrates. The protein is Isocitrate lyase (aceA) of Escherichia coli O6:H1 (strain CFT073 / ATCC 700928 / UPEC).